A 279-amino-acid polypeptide reads, in one-letter code: 3-methyl-2-oxobutanoate hydroxymethyltransferase (279 aa).

Mg(2+)-binding residues include aspartate 43 and aspartate 82. Residues 43–44 (DS), aspartate 82, and lysine 112 contribute to the 3-methyl-2-oxobutanoate site. Glutamate 114 provides a ligand contact to Mg(2+). Residue glutamate 181 is the Proton acceptor of the active site.

The protein belongs to the PanB family. As to quaternary structure, homodecamer; pentamer of dimers. It depends on Mg(2+) as a cofactor.

The protein localises to the cytoplasm. It catalyses the reaction 3-methyl-2-oxobutanoate + (6R)-5,10-methylene-5,6,7,8-tetrahydrofolate + H2O = 2-dehydropantoate + (6S)-5,6,7,8-tetrahydrofolate. It functions in the pathway cofactor biosynthesis; (R)-pantothenate biosynthesis; (R)-pantoate from 3-methyl-2-oxobutanoate: step 1/2. In terms of biological role, catalyzes the reversible reaction in which hydroxymethyl group from 5,10-methylenetetrahydrofolate is transferred onto alpha-ketoisovalerate to form ketopantoate. The sequence is that of 3-methyl-2-oxobutanoate hydroxymethyltransferase from Geobacillus sp. (strain WCH70).